Reading from the N-terminus, the 217-residue chain is Pyrophosphatase PpaX (217 aa).

The active-site Nucleophile is aspartate 11.

This sequence belongs to the HAD-like hydrolase superfamily. PpaX family. Requires Mg(2+) as cofactor.

It carries out the reaction diphosphate + H2O = 2 phosphate + H(+). Functionally, hydrolyzes pyrophosphate formed during P-Ser-HPr dephosphorylation by HPrK/P. Might play a role in controlling the intracellular pyrophosphate pool. This is Pyrophosphatase PpaX from Listeria monocytogenes serotype 4a (strain HCC23).